The chain runs to 168 residues: Histone doublet miniH2B-H2A (168 aa).

It localises to the host nucleus. It is found in the host cytoplasm. The protein resides in the virion. Histone-like protein that is recruited to viral factories during viral replication and participates in viral DNA packaging and virion production probably by forming unstable nucleosome-like particles. May compact the viral DNA. The polypeptide is Histone doublet miniH2B-H2A (Melbournevirus (MelV)).